Consider the following 469-residue polypeptide: MFLPRPDFRIALFICFMAVSFVISRFGSEVRPTLLLALPLVLGHVSTGLIGFVLNVIAGHHSTVTLAASTIGTALLWLPMLVPMGTLISLTVLVSQLHGAERERDIGPLFRQALWLAMLLGLVMFTFLSVVPALLPLFGIVPDIVPGAAKFLHVVRWGSLAFPLYFCMRYFCEGMHCTFPTMLLGFGGLLVLVPLSYALTYGRFGFSEYGVEGLGIATVMVMWLQAVVFALYLWRSRRFAHLQLFAHLELPCWARIRDLLNIGLPIGISILMEGGLFIVTTLLIGRFGTDEIAAHQIALSVAQLCFMIPMGVAEATTVRIGHAVGRCDLLVMRRVAWAGYAIVIGTQTLSASVLLLGYDVIVAAYTDDLVVASLASKLLLFAAIFQFPDGLQMLSSGVLRGMKDTRVPMLLAMISYWGLGMPLGLGLGFALEWNSRGMWIGLIIGLTAAAVLLGWRFRVVSERMFAGIP.

The next 12 helical transmembrane spans lie at 10–30, 34–54, 74–94, 121–141, 179–199, 214–234, 264–284, 292–312, 335–355, 369–389, 409–429, and 437–457; these read IALF…GSEV, LLLA…GFVL, ALLW…TVLV, GLVM…FGIV, FPTM…SYAL, LGIA…LYLW, LPIG…TLLI, IAAH…PMGV, VAWA…SVLL, LVVA…QFPD, MLLA…GLGF, and GMWI…GWRF.

It belongs to the multi antimicrobial extrusion (MATE) (TC 2.A.66.1) family.

The protein resides in the cell inner membrane. Its function is as follows. Multidrug efflux pump. The polypeptide is Probable multidrug resistance protein NorM (norM) (Xylella fastidiosa (strain 9a5c)).